A 301-amino-acid chain; its full sequence is Aquaporin-10 (301 aa).

Residues 1-22 lie on the Cytoplasmic side of the membrane; the sequence is MVFTQAPAEIMGHLRIRSLLAR. Residues 23-41 form a helical membrane-spanning segment; the sequence is QCLAEFLGVFVLMLLTQGA. Topologically, residues 42–55 are extracellular; the sequence is VAQAVTSGETKGNF. Residues 56–75 form a helical membrane-spanning segment; it reads FTMFLAGSLAVTIAIYVGGN. Residues 76–77 are Cytoplasmic-facing; the sequence is VS. The segment at residues 78 to 90 is an intramembrane region (discontinuously helical); it reads GAHLNPAFSLAMC. Residues 82 to 84 carry the NPA 1 motif; the sequence is NPA. The Cytoplasmic portion of the chain corresponds to 91-96; it reads IVGRLP. Residues 97 to 121 traverse the membrane as a helical segment; it reads WVKLPIYILVQLLSAFCASGATYVL. Residues 122–158 are Extracellular-facing; sequence YHDALQNYTGGNLTVTGPKETASIFATYPAPYLSLNN. N-linked (GlcNAc...) asparagine glycans are attached at residues Asn128 and Asn133. Residues 159-176 form a helical membrane-spanning segment; it reads GFLDQVLGTGMLIVGLLA. The Cytoplasmic portion of the chain corresponds to 177–188; it reads ILDRRNKGVPAG. The chain crosses the membrane as a helical span at residues 189-205; it reads LEPVVVGMLILALGLSM. The Extracellular portion of the chain corresponds to 206-208; it reads GAN. An intramembrane region (discontinuously helical) is located at residues 209–223; that stretch reads CGIPLNPARDLGPRL. Positions 214–216 match the NPA 2 motif; sequence NPA. At 224–241 the chain is on the extracellular side; sequence FTYVAGWGPEVFSAGNGW. The helical transmembrane segment at 242–262 threads the bilayer; the sequence is WWVPVVAPLVGATVGTATYQL. Residues 263–301 are Cytoplasmic-facing; that stretch reads LVALHHPEGPEPAQDLVSAQHKASELETPASAQMLECKL.

This sequence belongs to the MIP/aquaporin (TC 1.A.8) family. Homotetramer; each monomer provides an independent glycerol/water pore. N-glycosylation at Asn-133 increases the stability of the protein but has no effect on its activity. Detected in epithelial cells on villi in the ileum, and also in stomach, jejunum, colon, rectum, white adipose tissue and placenta (at protein level). Expressed in duodenum and jejunum. Highest expression in absorptive epithelial cells at the tips of villi in the jejunum. Detected in subcutaneous adipose tissue.

The protein localises to the apical cell membrane. It localises to the cell membrane. The protein resides in the lipid droplet. The enzyme catalyses glycerol(in) = glycerol(out). It carries out the reaction H2O(in) = H2O(out). The catalysed reaction is urea(in) = urea(out). With respect to regulation, glycerol transport is regulated by pH, with the porin being permeable to glycerol at pH 5.5 but not at pH 7.4. Water permeability, however, is not influenced by pH. Aquaglyceroporins form homotetrameric transmembrane channels, with each monomer independently mediating glycerol and water transport across the plasma membrane along their osmotic gradient. Could also be permeable to urea. Among aquaglyceroporins, it exhibits a unique pH-gated glycerol transport activity, being more active at acidic pH. It most likely plays a central role in the efflux of glycerol formed during triglyceride hydrolysis in adipocytes and in glycerol uptake by enterocytes, as both processes occur and are stimulated at acidic pH. The sequence is that of Aquaporin-10 from Homo sapiens (Human).